The primary structure comprises 515 residues: Galactokinase (515 aa).

Residues Arg48, Asp54, His55, and Asp57 each coordinate alpha-D-galactose. Residues Gly155, Gly157, Ser159, and Ser160 each contribute to the ATP site. Alpha-D-galactose is bound at residue Asp205. The Proton acceptor role is filled by Asp205. Ser249, Asn250, and Lys251 together coordinate ATP. Tyr259 contacts alpha-D-galactose.

The protein belongs to the GHMP kinase family. GalK subfamily.

The enzyme catalyses alpha-D-galactose + ATP = alpha-D-galactose 1-phosphate + ADP + H(+). The protein operates within carbohydrate metabolism; galactose metabolism. In terms of biological role, galactokinase is a key enzyme in the galactose metabolism where it catalyzes the conversion of alpha-D-galactose to galactose 1-phosphate. Can also induce the transcription of the gal genes in response to the organism being challenged with galactose as the sole source of carbon. The polypeptide is Galactokinase (Candida albicans (Yeast)).